A 578-amino-acid chain; its full sequence is Putative diflavin flavoprotein A 2 (578 aa).

The tract at residues 48–240 (RHGTTYNSFL…LQVVLVATGH (193 aa)) is zinc metallo-hydrolase. Fe cation-binding residues include H97, E99, D101, H164, D183, and H240. In terms of domain architecture, Flavodoxin-like spans 269 to 406 (VALFYVDGYG…LCREAGTDLG (138 aa)). The segment at 429–578 (IGRLSTGLYI…THHRKLGNHY (150 aa)) is flavodoxin-reductase-like.

This sequence in the N-terminal section; belongs to the zinc metallo-hydrolase group 3 family. The protein in the C-terminal section; belongs to the flavodoxin reductase family. It depends on Fe cation as a cofactor.

Functionally, mediates electron transfer from NADH to oxygen, reducing it to water. This modular protein has 3 redox cofactors, in other organisms the same activity requires 2 or 3 proteins. The protein is Putative diflavin flavoprotein A 2 (dfa2) of Synechocystis sp. (strain ATCC 27184 / PCC 6803 / Kazusa).